A 232-amino-acid chain; its full sequence is Clarin-2 (232 aa).

The chain crosses the membrane as a helical span at residues 10–30 (YGLASLLSFSSFILIIVALVV). N-linked (GlcNAc...) asparagine glycosylation is present at Asn48. Transmembrane regions (helical) follow at residues 101 to 121 (ILLL…FAIL), 139 to 159 (LWNV…VAAV), and 188 to 208 (SFWI…VVAI).

The protein belongs to the clarin family.

It is found in the cell projection. The protein resides in the stereocilium membrane. Plays a key role to hearing function. Required for normal organization and maintenance of the stereocilia bundle and for mechano-electrical transduction. This chain is Clarin-2, found in Homo sapiens (Human).